The chain runs to 291 residues: Methionine aminopeptidase (291 aa).

Histidine 65 is a binding site for substrate. A divalent metal cation-binding residues include aspartate 85, aspartate 96, and histidine 155. Histidine 163 provides a ligand contact to substrate. Residues glutamate 188 and glutamate 276 each coordinate a divalent metal cation.

The protein belongs to the peptidase M24A family. Methionine aminopeptidase archaeal type 2 subfamily. In terms of assembly, monomer. Requires Co(2+) as cofactor. The cofactor is Zn(2+). Mn(2+) serves as cofactor. Fe(2+) is required as a cofactor.

The catalysed reaction is Release of N-terminal amino acids, preferentially methionine, from peptides and arylamides.. Its function is as follows. Removes the N-terminal methionine from nascent proteins. The N-terminal methionine is often cleaved when the second residue in the primary sequence is small and uncharged (Met-Ala-, Cys, Gly, Pro, Ser, Thr, or Val). This is Methionine aminopeptidase from Archaeoglobus fulgidus (strain ATCC 49558 / DSM 4304 / JCM 9628 / NBRC 100126 / VC-16).